Reading from the N-terminus, the 85-residue chain is MSSGGLLLLLGLLTLWTELTPVSSRERHPDCDKPPDTGRCRKNVRAFYYKPSAKRCVQFIYGGCNANGNHFKSDHLCRCECLEYP.

Residues 1 to 24 (MSSGGLLLLLGLLTLWTELTPVSS) form the signal peptide. Residues 31 to 81 (CDKPPDTGRCRKNVRAFYYKPSAKRCVQFIYGGCNANGNHFKSDHLCRCEC) form the BPTI/Kunitz inhibitor domain. Intrachain disulfides connect cysteine 31/cysteine 81, cysteine 40/cysteine 64, and cysteine 56/cysteine 77.

This sequence belongs to the venom Kunitz-type family. As to quaternary structure, heterodimer; disulfide-linked. The A chains have phospholipase A2 activity and the B chains show homology with the basic protease inhibitors. As to expression, expressed by the venom gland.

It localises to the secreted. Beta-1-bungarotoxin is a presynaptic neurotoxin of the venom. The B chain is homologous to venom basic protease inhibitors but has no protease inhibitor activity and blocks voltage-gated potassium channels (Kv). The polypeptide is Kunitz-type serine protease inhibitor homolog beta-bungarotoxin BF B1 chain (Bungarus fasciatus (Banded krait)).